The chain runs to 546 residues: Probable protein kinase UbiB (546 aa).

The Protein kinase domain maps to 124–502 (DFDIKPLASA…RVRQGQSRYL (379 aa)). Residues 130–138 (LASASIAQV) and K153 contribute to the ATP site. D288 (proton acceptor) is an active-site residue. 2 consecutive transmembrane segments (helical) span residues 501–521 (YLFG…INRP) and 522–542 (DWQM…LIGW).

Belongs to the ABC1 family. UbiB subfamily.

The protein resides in the cell inner membrane. It participates in cofactor biosynthesis; ubiquinone biosynthesis [regulation]. Its function is as follows. Is probably a protein kinase regulator of UbiI activity which is involved in aerobic coenzyme Q (ubiquinone) biosynthesis. The polypeptide is Probable protein kinase UbiB (Enterobacter sp. (strain 638)).